Reading from the N-terminus, the 286-residue chain is Probable endonuclease 4 (286 aa).

Positions 72, 112, 147, 181, 184, 215, 228, 230, and 260 each coordinate Zn(2+).

The protein belongs to the AP endonuclease 2 family. Requires Zn(2+) as cofactor.

The catalysed reaction is Endonucleolytic cleavage to 5'-phosphooligonucleotide end-products.. In terms of biological role, endonuclease IV plays a role in DNA repair. It cleaves phosphodiester bonds at apurinic or apyrimidinic (AP) sites, generating a 3'-hydroxyl group and a 5'-terminal sugar phosphate. The protein is Probable endonuclease 4 of Mycoplasma pneumoniae (strain ATCC 29342 / M129 / Subtype 1) (Mycoplasmoides pneumoniae).